Here is a 508-residue protein sequence, read N- to C-terminus: Photosystem II CP47 reaction center protein (508 aa).

6 helical membrane-spanning segments follow: residues 21–36, 101–115, 140–156, 203–218, 237–252, and 457–472; these read AVHIMHTALVSGWAGS, IVFSGLCFLAAIWHW, GIHLFLSGLACFGFGAF, IAAGTLGILAGLFHLS, VLSSSIAAVFFAAFVV, and SFALLFFFGHIWHGAR.

This sequence belongs to the PsbB/PsbC family. PsbB subfamily. As to quaternary structure, PSII is composed of 1 copy each of membrane proteins PsbA, PsbB, PsbC, PsbD, PsbE, PsbF, PsbH, PsbI, PsbJ, PsbK, PsbL, PsbM, PsbT, PsbX, PsbY, PsbZ, Psb30/Ycf12, at least 3 peripheral proteins of the oxygen-evolving complex and a large number of cofactors. It forms dimeric complexes. Binds multiple chlorophylls. PSII binds additional chlorophylls, carotenoids and specific lipids. serves as cofactor.

The protein localises to the plastid. The protein resides in the chloroplast thylakoid membrane. Its function is as follows. One of the components of the core complex of photosystem II (PSII). It binds chlorophyll and helps catalyze the primary light-induced photochemical processes of PSII. PSII is a light-driven water:plastoquinone oxidoreductase, using light energy to abstract electrons from H(2)O, generating O(2) and a proton gradient subsequently used for ATP formation. The chain is Photosystem II CP47 reaction center protein from Ranunculus macranthus (Large buttercup).